The primary structure comprises 124 residues: Phycocyanin PC645 alpha-3 subunit (124 aa).

R71 is a binding site for (2R,3E)-phycocyanobilin. 3 residues coordinate mesobiliverdin: C73, Y81, and K97.

Belongs to the phycoerythrin family. In terms of assembly, heterotetramer of 2 different alpha chains and 2 identical beta chains which form 2 alpha-beta heterodimers within the heterotetramer. Contains one phycocyanobilin chromophore and one mesobiliverdin chromophore with binding mediated by both the alpha and beta subunits.

The protein localises to the plastid. It localises to the chloroplast thylakoid membrane. Functionally, light-harvesting photosynthetic tetrapyrrole chromophore-protein from the phycobiliprotein complex. The chain is Phycocyanin PC645 alpha-3 subunit from Chroomonas sp. (strain CCMP270).